The chain runs to 391 residues: Formate-dependent phosphoribosylglycinamide formyltransferase (391 aa).

N(1)-(5-phospho-beta-D-ribosyl)glycinamide-binding positions include 20-21 (EL) and E80. ATP-binding positions include R112, K153, 158 to 163 (SSGKGQ), 193 to 196 (EGFV), and E201. Positions 117-306 (RLAAETLGLP…EFALHVRAIL (190 aa)) constitute an ATP-grasp domain. The Mg(2+) site is built by E265 and E277. N(1)-(5-phospho-beta-D-ribosyl)glycinamide-binding positions include D284, K354, and 361–362 (RR).

This sequence belongs to the PurK/PurT family. Homodimer.

It catalyses the reaction N(1)-(5-phospho-beta-D-ribosyl)glycinamide + formate + ATP = N(2)-formyl-N(1)-(5-phospho-beta-D-ribosyl)glycinamide + ADP + phosphate + H(+). Its pathway is purine metabolism; IMP biosynthesis via de novo pathway; N(2)-formyl-N(1)-(5-phospho-D-ribosyl)glycinamide from N(1)-(5-phospho-D-ribosyl)glycinamide (formate route): step 1/1. Its function is as follows. Involved in the de novo purine biosynthesis. Catalyzes the transfer of formate to 5-phospho-ribosyl-glycinamide (GAR), producing 5-phospho-ribosyl-N-formylglycinamide (FGAR). Formate is provided by PurU via hydrolysis of 10-formyl-tetrahydrofolate. This is Formate-dependent phosphoribosylglycinamide formyltransferase from Shewanella sp. (strain W3-18-1).